The following is a 338-amino-acid chain: Large ribosomal subunit protein uL10 (338 aa).

Residues 302–338 (IAAQPQPAEEAEEKVEEEEEEEKEEEEALAGLGALFG) are disordered. Residues 310–329 (EEAEEKVEEEEEEEKEEEEA) are compositionally biased toward acidic residues.

It belongs to the universal ribosomal protein uL10 family. In terms of assembly, part of the 50S ribosomal subunit. Forms part of the ribosomal stalk which helps the ribosome interact with GTP-bound translation factors. Forms a heptameric L10(L12)2(L12)2(L12)2 complex, where L10 forms an elongated spine to which the L12 dimers bind in a sequential fashion.

In terms of biological role, forms part of the ribosomal stalk, playing a central role in the interaction of the ribosome with GTP-bound translation factors. The protein is Large ribosomal subunit protein uL10 of Thermococcus sibiricus (strain DSM 12597 / MM 739).